A 663-amino-acid chain; its full sequence is Polyunsaturated fatty acid lipoxygenase ALOX15 (663 aa).

Residues 2–115 form the PLAT domain; that stretch reads GVYRIRVSTG…ILNLPEGTGC (114 aa). In terms of domain architecture, Lipoxygenase spans 116–663; sequence TVVEDSQGLF…PSLVENSVAI (548 aa). His-361, His-366, His-541, His-545, and Ile-663 together coordinate Fe cation.

It belongs to the lipoxygenase family. Interacts with PEBP1; in response to IL13/interleukin-13, prevents the interaction of PEBP1 with RAF1 to activate the ERK signaling cascade. Requires Fe cation as cofactor. As to expression, found in pituitary and pineal glands as well as leukocytes, kidney, aorta, small intestine and cornea. Also expressed by resident peritoneal macrophages (at protein level).

The protein resides in the cytoplasm. It localises to the cytosol. It is found in the cell membrane. The protein localises to the lipid droplet. It catalyses the reaction (5Z,8Z,11Z,14Z)-eicosatetraenoate + O2 = (12S)-hydroperoxy-(5Z,8Z,10E,14Z)-eicosatetraenoate. The enzyme catalyses (5Z,8Z,11Z,14Z)-eicosatetraenoate + O2 = (15S)-hydroperoxy-(5Z,8Z,11Z,13E)-eicosatetraenoate. The catalysed reaction is (9Z,12Z)-octadecadienoate + O2 = (13S)-hydroperoxy-(9Z,11E)-octadecadienoate. It carries out the reaction (5Z,8Z,11Z,14Z)-eicosatetraenoate + 2 O2 = (14R,15S)-dihydroperoxy-(5Z,8Z,10E,12E)-eicosatetraenoate. It catalyses the reaction (5Z,8Z,11Z,14Z)-eicosatetraenoate + 2 O2 = (8S,15S)-dihydroperoxy-(5Z,9E,11Z,13E)-eicosatetraenoate. The enzyme catalyses (14S,15R)-epoxy-(5Z,8Z,11Z)-eicosatrienoate + O2 = (8S)-hydroperoxy-(14S,15R)-epoxy-(5Z,9E,11Z)-eicosatrienoate. The catalysed reaction is (14S,15R)-epoxy-(5Z,8Z,11Z)-eicosatrienoate + O2 = (12S)-hydroperoxy-(14S,15R)-epoxy-(5Z,8Z,10E)-eicosatrienoate. It carries out the reaction (14R,15S)-epoxy-(5Z,8Z,11Z)-eicosatrienoate + O2 = (5S)-hydroperoxy-(14R,15S)-epoxy-(6E,8Z,11Z)-eicosatrienoate. It catalyses the reaction (14R,15S)-epoxy-(5Z,8Z,11Z)-eicosatrienoate + O2 = (12S)-hydroperoxy-(14R,15S)-epoxy-(5Z,8Z,10E)-eicosatrienoate. The enzyme catalyses (15R)-hydroperoxy-(5Z,8Z,11Z,13E)-eicosatetraenoate = 15-oxo-(5Z,8Z,11Z,13E)-eicosatetraenoate + H2O. The catalysed reaction is (15S)-hydroperoxy-(5Z,8Z,11Z,13E)-eicosatetraenoate = (14S,15S)-epoxy-(5Z,8Z,10E,12E)-eicosatetraenoate + H2O. It carries out the reaction (12S)-hydroperoxy-(5Z,8Z,10E,14Z)-eicosatetraenoate = (8S)-hydroxy-(11S,12S)-epoxy-(5Z,9E,14Z)-eicosatrienoate. It catalyses the reaction (4Z,7Z,10Z,13Z,16Z)-docosapentaenoate + O2 = 14-hydroperoxy-(4Z,7Z,10Z,12E,16Z)-docosapentaenoate. The enzyme catalyses (7Z,10Z,13Z,16Z,19Z)-docosapentaenoate + O2 = 14-hydroperoxy-(7Z,10Z,12E,16Z,19Z)-docosapentaenoate. The catalysed reaction is (4Z,7Z,10Z,13Z,16Z,19Z)-docosahexaenoate + O2 = (14S)-hydroperoxy-(4Z,7Z,10Z,12E,16Z,19Z)-docosahexaenoate. It carries out the reaction (4Z,7Z,10Z,13Z,16Z,19Z)-docosahexaenoate + O2 = (17S)-hydroperoxy-(4Z,7Z,10Z,13Z,15E,19Z)-docosahexaenoate. It catalyses the reaction (7S)-hydroperoxy-(4Z,8E,10Z,13Z,16Z,19Z)-docosahexaenoate + O2 = (7S,14S)-dihydroperoxy-(4Z,8E,10Z,12E,16Z,19Z)-docosahexaenoate. The enzyme catalyses (7S)-hydroperoxy-(4Z,8E,10Z,13Z,16Z,19Z)-docosahexaenoate + O2 = (7S,17S)-dihydroperoxy-(4Z,8E,10Z,13Z,15E,19Z)-docosahexaenoate. The catalysed reaction is (4Z,7Z,10Z,13Z,16Z,19Z)-docosahexaenoate + O2 = (11S)-hydroperoxy-(4Z,7Z,9E,13Z,16Z,19Z)-docosahexaenoate. It carries out the reaction N-(5Z,8Z,11Z,14Z)-eicosatetraenoyl-taurine + O2 = N-(12S)-hydroperoxy-(5Z,8Z,10E,14Z)-eicosatetraenoyl-taurine. It catalyses the reaction N-(5Z,8Z,11Z,14Z)-eicosatetraenoyl-gamma-aminobutanoate + O2 = N-(12S)-hydroperoxy-(5Z,8Z,10E,14Z)-eicosatetraenoyl-gamma-aminobutanoate. The enzyme catalyses N-(5Z,8Z,11Z,14Z)-eicosatetraenoyl-glycine + O2 = N-(12S)-hydroperoxy-(5Z,8Z,10E,14Z)-eicosatetraenoyl-glycine. The catalysed reaction is N-(5Z,8Z,11Z,14Z)-eicosatetraenoyl-L-alanine + O2 = N-(12S)-hydroperoxy-(5Z,8Z,10E,14Z)-eicosatetraenoyl-alanine. It carries out the reaction N-(5Z,8Z,11Z,14Z)-eicosatetraenoyl-taurine + O2 = N-(15S)-hydroperoxy-(5Z,8Z,11Z,13E)-eicosatetraenoyl-taurine. It catalyses the reaction N-(5Z,8Z,11Z,14Z)-eicosatetraenoyl-gamma-aminobutanoate + O2 = N-(15S)-hydroperoxy-(5Z,8Z,11Z,13E)-eicosatetraenoyl-gamma-aminobutanoate. The enzyme catalyses N-(5Z,8Z,11Z,14Z)-eicosatetraenoyl-glycine + O2 = N-(15S)-hydroperoxy-(5Z,8Z,11Z,13E)-eicosatetraenoyl-glycine. The catalysed reaction is N-(5Z,8Z,11Z,14Z)-eicosatetraenoyl-L-alanine + O2 = N-(15S)-hydroperoxy-(5Z,8Z,11Z,13E)-eicosatetraenoyl-alanine. It participates in lipid metabolism; hydroperoxy eicosatetraenoic acid biosynthesis. In terms of biological role, non-heme iron-containing dioxygenase that catalyzes the stereo-specific peroxidation of free and esterified polyunsaturated fatty acids generating a spectrum of bioactive lipid mediators. It inserts peroxyl groups at C12 or C15 of arachidonate ((5Z,8Z,11Z,14Z)-eicosatetraenoate) producing both 12-hydroperoxyeicosatetraenoate/12-HPETE and 15-hydroperoxyeicosatetraenoate/15-HPETE. It may then act on 12-HPETE to produce hepoxilins, which may show pro-inflammatory properties. Can also peroxidize linoleate ((9Z,12Z)-octadecadienoate) to 13-hydroperoxyoctadecadienoate. May participate in the sequential oxidations of DHA ((4Z,7Z,10Z,13Z,16Z,19Z)-docosahexaenoate) to generate specialized pro-resolving mediators (SPMs)like resolvin D5 ((7S,17S)-diHPDHA) and (7S,14S)-diHPDHA, that actively down-regulate the immune response and have anti-aggregation properties with platelets. Can convert epoxy fatty acids to hydroperoxy-epoxides derivatives followed by an intramolecular nucleophilic substitution leading to the formation of monocyclic endoperoxides. Plays an important role during the maintenance of self-tolerance by peroxidizing membrane-bound phosphatidylethanolamine which can then signal the sorting process for clearance of apoptotic cells during inflammation and prevent an autoimmune response. In addition to its role in the immune and inflammatory responses, this enzyme may play a role in epithelial wound healing in the cornea through production of lipoxin A4 (LXA(4)) and docosahexaenoic acid-derived neuroprotectin D1 (NPD1; 10R,17S-HDHA), both lipid autacoids exhibit anti-inflammatory and neuroprotective properties. Furthermore, it may regulate actin polymerization which is crucial for several biological processes such as the phagocytosis of apoptotic cells. It is also implicated in the generation of endogenous ligands for peroxisome proliferator activated receptor (PPAR-gamma), hence modulating macrophage development and function. It may also exert a negative effect on skeletal development by regulating bone mass through this pathway. As well as participates in ER stress and downstream inflammation in adipocytes, pancreatic islets, and liver. Finally, it is also involved in the cellular response to IL13/interleukin-13. The chain is Polyunsaturated fatty acid lipoxygenase ALOX15 from Mus musculus (Mouse).